Reading from the N-terminus, the 286-residue chain is Pyridoxal kinase PdxY (286 aa).

Substrate contacts are provided by residues S9 and 44–45; that span reads TQ. The ATP site is built by D111, E148, and K181. D222 provides a ligand contact to substrate.

Belongs to the pyridoxine kinase family. PdxY subfamily. Homodimer. Mg(2+) serves as cofactor.

It catalyses the reaction pyridoxal + ATP = pyridoxal 5'-phosphate + ADP + H(+). It participates in cofactor metabolism; pyridoxal 5'-phosphate salvage; pyridoxal 5'-phosphate from pyridoxal: step 1/1. Functionally, pyridoxal kinase involved in the salvage pathway of pyridoxal 5'-phosphate (PLP). Catalyzes the phosphorylation of pyridoxal to PLP. This is Pyridoxal kinase PdxY from Pasteurella multocida (strain Pm70).